The following is a 429-amino-acid chain: Alpha-galactosidase A (429 aa).

A signal peptide spans 1 to 31 (MQLRNPELHLGCALALRFLALVSWDIPGARA). Disulfide bonds link Cys52–Cys94 and Cys56–Cys63. A glycan (N-linked (GlcNAc...) asparagine) is linked at Asn139. A disulfide bridge links Cys142 with Cys172. Asp170 serves as the catalytic Nucleophile. A glycan (N-linked (GlcNAc...) asparagine) is linked at Asn192. A disulfide bond links Cys202 and Cys223. Residue 203-207 (EWPLY) coordinates substrate. An N-linked (GlcNAc...) asparagine glycan is attached at Asn215. The Proton donor role is filled by Asp231. The cysteines at positions 378 and 382 are disulfide-linked.

Belongs to the glycosyl hydrolase 27 family. Homodimer.

It localises to the lysosome. The enzyme catalyses Hydrolysis of terminal, non-reducing alpha-D-galactose residues in alpha-D-galactosides, including galactose oligosaccharides, galactomannans and galactolipids.. The catalysed reaction is a globoside Gb3Cer (d18:1(4E)) + H2O = a beta-D-Gal-(1-&gt;4)-beta-D-Glc-(1&lt;-&gt;1)-Cer(d18:1(4E)) + D-galactose. It catalyses the reaction a globoside Gb3Cer + H2O = a beta-D-galactosyl-(1-&gt;4)-beta-D-glucosyl-(1&lt;-&gt;1)-ceramide + D-galactose. Its activity is regulated as follows. Galactosylgalactosylglucosylceramidase activity is stimulated by saposin B and ammonium chloride. Catalyzes the hydrolysis of glycosphingolipids and participates in their degradation in the lysosome. This is Alpha-galactosidase A from Homo sapiens (Human).